Here is a 92-residue protein sequence, read N- to C-terminus: Small ribosomal subunit protein uS19 (92 aa).

It belongs to the universal ribosomal protein uS19 family.

Its function is as follows. Protein S19 forms a complex with S13 that binds strongly to the 16S ribosomal RNA. The polypeptide is Small ribosomal subunit protein uS19 (Roseobacter denitrificans (strain ATCC 33942 / OCh 114) (Erythrobacter sp. (strain OCh 114))).